The sequence spans 66 residues: MASKIFFVLAVFLVMSAVLPESFAGCKKLNSNCSRQYRECCHGLVCRRPNYGNGRGILWRCVKAKK.

Residues 1-24 (MASKIFFVLAVFLVMSAVLPESFA) form the signal peptide. Intrachain disulfides connect Cys-26–Cys-41, Cys-33–Cys-46, and Cys-40–Cys-61.

It is found in the secreted. The protein resides in the nematocyst. In terms of biological role, alpha-toxins act on postsynaptic membranes, they bind to the nicotinic acetylcholine receptors (nAChR) and thus inhibit them. This toxin competes with alpha-bungarotoxin for binding to orthosteric sites on muscle-type T.carlifornicus (IC(50)=408 nM) and human alpha-7/CHRNA7 nAChRs (IC(50)=14.16 uM). In Metridium senile (Brown sea anemone), this protein is Alpha-actitoxin-Ms11a-1.